Here is an 88-residue protein sequence, read N- to C-terminus: Small ribosomal subunit protein uS17 (88 aa).

This sequence belongs to the universal ribosomal protein uS17 family. In terms of assembly, part of the 30S ribosomal subunit.

Its function is as follows. One of the primary rRNA binding proteins, it binds specifically to the 5'-end of 16S ribosomal RNA. The polypeptide is Small ribosomal subunit protein uS17 (Mycoplasmopsis agalactiae (strain NCTC 10123 / CIP 59.7 / PG2) (Mycoplasma agalactiae)).